The chain runs to 386 residues: 11-beta-hydroxysteroid dehydrogenase type 2 (386 aa).

82–111 (TRAVLITGCDTGFGKETAKKLDAMGFTVLA) contacts NAD(+). Serine 219 contacts substrate. The active-site Proton acceptor is tyrosine 232.

Belongs to the short-chain dehydrogenases/reductases (SDR) family. Interacts with ligand-free cytoplasmic NR3C2. In terms of tissue distribution, highly expressed in kidney. Also found in colon and small intestine. Not expressed in the adrenal gland. Expressed in uterus.

Its subcellular location is the microsome. It is found in the endoplasmic reticulum. The enzyme catalyses an 11beta-hydroxysteroid + NAD(+) = an 11-oxosteroid + NADH + H(+). It catalyses the reaction corticosterone + NAD(+) = 11-dehydrocorticosterone + NADH + H(+). The catalysed reaction is 11beta,17beta-dihydroxyandrost-4-ene-3-one + NAD(+) = 17beta-hydroxyandrost-4-ene-3,11-dione + NADH + H(+). It carries out the reaction 11beta-hydroxyandrost-4-ene-3,17-dione + NAD(+) = androst-4-ene-3,11,17-trione + NADH + H(+). It functions in the pathway steroid metabolism. With respect to regulation, inhibited by glycyrrhetinic acid. Induced by progesterone, through the Ihh signaling pathway. In terms of biological role, catalyzes the conversion of biologically active 11beta-hydroxyglucocorticoids (11beta-hydroxysteroid) such as corticosterone, to inactive 11-ketoglucocorticoids (11-oxosteroid) such as 11-dehydrocorticosterone, in the presence of NAD(+). Functions as a dehydrogenase (oxidase), thereby decreasing the concentration of active glucocorticoids, thus protecting the nonselective mineralocorticoid receptor from occupation by glucocorticoids. Plays an important role in maintaining glucocorticoids balance during preimplantation and protects the fetus from excessive maternal corticosterone exposure. Catalyzes the oxidation of 11beta-hydroxytestosterone (11beta,17beta-dihydroxyandrost-4-ene-3-one) to 11-ketotestosterone (17beta-hydroxyandrost-4-ene-3,11-dione), a major bioactive androgen. Catalyzes the conversion of 11beta-hydroxyandrostenedione (11beta-hydroxyandrost-4-ene-3,17-dione) to 11-ketoandrostenedione (androst-4-ene-3,11,17-trione), which can be further metabolized to 11-ketotestosterone. Converts 7-beta-25-dihydroxycholesterol to 7-oxo-25-hydroxycholesterol in vitro. 7-beta-25-dihydroxycholesterol (not 7-oxo-25-hydroxycholesterol) acts as a ligand for the G-protein-coupled receptor (GPCR) Epstein-Barr virus-induced gene 2 (EBI2) and may thereby regulate immune cell migration. In Mus musculus (Mouse), this protein is 11-beta-hydroxysteroid dehydrogenase type 2 (Hsd11b2).